Reading from the N-terminus, the 301-residue chain is Porphobilinogen deaminase (301 aa).

At Cys-242 the chain carries S-(dipyrrolylmethanemethyl)cysteine.

The protein belongs to the HMBS family. As to quaternary structure, monomer. The cofactor is dipyrromethane.

It carries out the reaction 4 porphobilinogen + H2O = hydroxymethylbilane + 4 NH4(+). The protein operates within porphyrin-containing compound metabolism; protoporphyrin-IX biosynthesis; coproporphyrinogen-III from 5-aminolevulinate: step 2/4. Tetrapolymerization of the monopyrrole PBG into the hydroxymethylbilane pre-uroporphyrinogen in several discrete steps. This is Porphobilinogen deaminase from Rickettsia akari (strain Hartford).